The following is a 130-amino-acid chain: MAKRKIVKKKVVRKSIAKGIVYISATFNNTMVTVTDEMGNAIAWSSAGGLGFKGSKKSTPYAAQQAVEDALNKAKEHGIKEVGIKVQGPGSGRETAVKSVGAVEGIKVTFLKDITPLAHNGCRPPKRRRV.

This sequence belongs to the universal ribosomal protein uS11 family. In terms of assembly, part of the 30S ribosomal subunit. Interacts with proteins S7 and S18. Binds to IF-3.

Functionally, located on the platform of the 30S subunit, it bridges several disparate RNA helices of the 16S rRNA. Forms part of the Shine-Dalgarno cleft in the 70S ribosome. This is Small ribosomal subunit protein uS11 from Campylobacter curvus (strain 525.92).